Consider the following 778-residue polypeptide: Lon protease (778 aa).

A Lon N-terminal domain is found at 6–207 (LPLMALRDMV…TVISTLTSNI (202 aa)). Residue 356 to 363 (GPPGVGKT) participates in ATP binding. Residues 592 to 773 (EDQIGSTTGL…DQVLKHALVE (182 aa)) form the Lon proteolytic domain. Catalysis depends on residues S679 and K722.

It belongs to the peptidase S16 family. In terms of assembly, homohexamer. Organized in a ring with a central cavity.

It is found in the cytoplasm. The enzyme catalyses Hydrolysis of proteins in presence of ATP.. Its function is as follows. ATP-dependent serine protease that mediates the selective degradation of mutant and abnormal proteins as well as certain short-lived regulatory proteins. Required for cellular homeostasis and for survival from DNA damage and developmental changes induced by stress. Degrades polypeptides processively to yield small peptide fragments that are 5 to 10 amino acids long. Binds to DNA in a double-stranded, site-specific manner. This is Lon protease from Rickettsia felis (strain ATCC VR-1525 / URRWXCal2) (Rickettsia azadi).